The sequence spans 245 residues: Carbohydrate deacetylase (245 aa).

Positions 61 and 122 each coordinate Mg(2+).

Belongs to the YdjC deacetylase family. Mg(2+) is required as a cofactor.

Probably catalyzes the deacetylation of acetylated carbohydrates an important step in the degradation of oligosaccharides. The polypeptide is Carbohydrate deacetylase (celC) (Geobacillus stearothermophilus (Bacillus stearothermophilus)).